The chain runs to 245 residues: Octanoyltransferase (245 aa).

The region spanning 54–242 (KTAHEQVWLL…AFEKIFGPTI (189 aa)) is the BPL/LPL catalytic domain. Substrate is bound by residues 93–100 (RGGEFTYH), 173–175 (AIG), and 186–188 (GVS). C204 acts as the Acyl-thioester intermediate in catalysis.

Belongs to the LipB family.

Its subcellular location is the cytoplasm. The catalysed reaction is octanoyl-[ACP] + L-lysyl-[protein] = N(6)-octanoyl-L-lysyl-[protein] + holo-[ACP] + H(+). The protein operates within protein modification; protein lipoylation via endogenous pathway; protein N(6)-(lipoyl)lysine from octanoyl-[acyl-carrier-protein]: step 1/2. In terms of biological role, catalyzes the transfer of endogenously produced octanoic acid from octanoyl-acyl-carrier-protein onto the lipoyl domains of lipoate-dependent enzymes. Lipoyl-ACP can also act as a substrate although octanoyl-ACP is likely to be the physiological substrate. In Bartonella tribocorum (strain CIP 105476 / IBS 506), this protein is Octanoyltransferase.